A 367-amino-acid chain; its full sequence is S-adenosylmethionine decarboxylase proenzyme 3 (367 aa).

Catalysis depends on residues Glu-9 and Glu-12. Residue Ser-69 is the Schiff-base intermediate with substrate; via pyruvic acid of the active site. Residue Ser-69 is modified to Pyruvic acid (Ser); by autocatalysis. The active-site Proton donor; for catalytic activity is the Cys-83. Residues Ser-234 and His-247 each act as proton acceptor; for processing activity in the active site.

This sequence belongs to the eukaryotic AdoMetDC family. Pyruvate serves as cofactor. In terms of processing, is synthesized initially as an inactive proenzyme. Formation of the active enzyme involves a self-maturation process in which the active site pyruvoyl group is generated from an internal serine residue via an autocatalytic post-translational modification. Two non-identical subunits are generated from the proenzyme in this reaction, and the pyruvate is formed at the N-terminus of the alpha chain, which is derived from the carboxyl end of the proenzyme. The post-translation cleavage follows an unusual pathway, termed non-hydrolytic serinolysis, in which the side chain hydroxyl group of the serine supplies its oxygen atom to form the C-terminus of the beta chain, while the remainder of the serine residue undergoes an oxidative deamination to produce ammonia and the pyruvoyl group blocking the N-terminus of the alpha chain.

The enzyme catalyses S-adenosyl-L-methionine + H(+) = S-adenosyl 3-(methylsulfanyl)propylamine + CO2. Its pathway is amine and polyamine biosynthesis; S-adenosylmethioninamine biosynthesis; S-adenosylmethioninamine from S-adenosyl-L-methionine: step 1/1. The chain is S-adenosylmethionine decarboxylase proenzyme 3 (SAMDC3) from Brassica juncea (Indian mustard).